The chain runs to 461 residues: Phosphomethylpyrimidine synthase (461 aa).

Substrate-binding positions include Asn-80, Met-109, Tyr-139, His-175, 195–197, 236–239, and Glu-275; these read SRG and DSLR. His-279 is a Zn(2+) binding site. Tyr-302 lines the substrate pocket. His-343 provides a ligand contact to Zn(2+). [4Fe-4S] cluster contacts are provided by Cys-423, Cys-426, and Cys-431.

This sequence belongs to the ThiC family. It depends on [4Fe-4S] cluster as a cofactor.

It catalyses the reaction 5-amino-1-(5-phospho-beta-D-ribosyl)imidazole + S-adenosyl-L-methionine = 4-amino-2-methyl-5-(phosphooxymethyl)pyrimidine + CO + 5'-deoxyadenosine + formate + L-methionine + 3 H(+). It participates in cofactor biosynthesis; thiamine diphosphate biosynthesis. Functionally, catalyzes the synthesis of the hydroxymethylpyrimidine phosphate (HMP-P) moiety of thiamine from aminoimidazole ribotide (AIR) in a radical S-adenosyl-L-methionine (SAM)-dependent reaction. The sequence is that of Phosphomethylpyrimidine synthase from Picosynechococcus sp. (strain ATCC 27264 / PCC 7002 / PR-6) (Agmenellum quadruplicatum).